Consider the following 406-residue polypeptide: 3-oxoacyl-[acyl-carrier-protein] synthase 1 (406 aa).

A Ketosynthase family 3 (KS3) domain is found at 1-403; sequence MRRTVITGFG…GTNATLIFKR (403 aa). Active-site for beta-ketoacyl synthase activity residues include Cys162, His297, and His332.

The protein belongs to the thiolase-like superfamily. Beta-ketoacyl-ACP synthases family. As to quaternary structure, homodimer.

It is found in the cytoplasm. The catalysed reaction is a fatty acyl-[ACP] + malonyl-[ACP] + H(+) = a 3-oxoacyl-[ACP] + holo-[ACP] + CO2. It carries out the reaction (3Z)-decenoyl-[ACP] + malonyl-[ACP] + H(+) = 3-oxo-(5Z)-dodecenoyl-[ACP] + holo-[ACP] + CO2. It functions in the pathway lipid metabolism; fatty acid biosynthesis. Involved in the type II fatty acid elongation cycle. Catalyzes the elongation of a wide range of acyl-ACP by the addition of two carbons from malonyl-ACP to an acyl acceptor. Can also use unsaturated fatty acids. Catalyzes a key reaction in unsaturated fatty acid (UFA) synthesis, the elongation of the cis-3-decenoyl-ACP produced by FabA. This Haemophilus influenzae (strain ATCC 51907 / DSM 11121 / KW20 / Rd) protein is 3-oxoacyl-[acyl-carrier-protein] synthase 1 (fabB).